Reading from the N-terminus, the 93-residue chain is Cobalt transport protein CbiN (93 aa).

Transmembrane regions (helical) follow at residues 5–25 (LILL…NHGG) and 63–83 (LLFT…LGYA).

The protein belongs to the CbiN family. Forms an energy-coupling factor (ECF) transporter complex composed of an ATP-binding protein (A component, CbiO), a transmembrane protein (T component, CbiQ) and 2 possible substrate-capture proteins (S components, CbiM and CbiN) of unknown stoichimetry.

It localises to the cell inner membrane. Its pathway is cofactor biosynthesis; adenosylcobalamin biosynthesis. In terms of biological role, part of the energy-coupling factor (ECF) transporter complex CbiMNOQ involved in cobalt import. The polypeptide is Cobalt transport protein CbiN (Klebsiella pneumoniae subsp. pneumoniae (strain ATCC 700721 / MGH 78578)).